The chain runs to 102 residues: PE family immunomodulator PE15 (102 aa).

The region spanning 3 to 91 is the PE domain; that stretch reads LRVVPESLAG…SGASYAARDA (89 aa).

Belongs to the mycobacterial PE family.

The protein resides in the secreted. It localises to the cell envelope. The protein localises to the cell surface. In terms of biological role, may play a pivotal role in the evasion of host immune response by M.tuberculosis. Mediates production of IL-10 via activation of the p38 and ERK1/2 mitogen-activated protein kinase (MAPK) signaling pathways. This chain is PE family immunomodulator PE15 (PE15), found in Mycobacterium tuberculosis (strain CDC 1551 / Oshkosh).